The primary structure comprises 593 residues: UvrABC system protein C (593 aa).

In terms of domain architecture, GIY-YIG spans Thr-13–Val-91. The region spanning Asp-202–Ile-237 is the UVR domain.

The protein belongs to the UvrC family. In terms of assembly, interacts with UvrB in an incision complex.

Its subcellular location is the cytoplasm. Its function is as follows. The UvrABC repair system catalyzes the recognition and processing of DNA lesions. UvrC both incises the 5' and 3' sides of the lesion. The N-terminal half is responsible for the 3' incision and the C-terminal half is responsible for the 5' incision. This is UvrABC system protein C from Caldicellulosiruptor saccharolyticus (strain ATCC 43494 / DSM 8903 / Tp8T 6331).